Consider the following 413-residue polypeptide: Aspartate aminotransferase, cytoplasmic (413 aa).

L-aspartate contacts are provided by G39 and W141. S149 is modified (phosphoserine). N195 serves as a coordination point for L-aspartate. K259 is modified (N6-(pyridoxal phosphate)lysine). R387 is an L-aspartate binding site.

The protein belongs to the class-I pyridoxal-phosphate-dependent aminotransferase family. As to quaternary structure, homodimer. It depends on pyridoxal 5'-phosphate as a cofactor.

Its subcellular location is the cytoplasm. The enzyme catalyses L-aspartate + 2-oxoglutarate = oxaloacetate + L-glutamate. The catalysed reaction is L-cysteine + 2-oxoglutarate = 2-oxo-3-sulfanylpropanoate + L-glutamate. It catalyses the reaction (2S)-2-aminobutanoate + 2-oxoglutarate = 2-oxobutanoate + L-glutamate. It carries out the reaction 3-sulfino-L-alanine + 2-oxoglutarate = 3-sulfinopyruvate + L-glutamate. Functionally, biosynthesis of L-glutamate from L-aspartate or L-cysteine. Important regulator of levels of glutamate, the major excitatory neurotransmitter of the vertebrate central nervous system. Acts as a scavenger of glutamate in brain neuroprotection. The aspartate aminotransferase activity is involved in hepatic glucose synthesis during development and in adipocyte glyceroneogenesis. Using L-cysteine as substrate, regulates levels of mercaptopyruvate, an important source of hydrogen sulfide. Mercaptopyruvate is converted into H(2)S via the action of 3-mercaptopyruvate sulfurtransferase (3MST). Hydrogen sulfide is an important synaptic modulator and neuroprotectant in the brain. This Macaca fascicularis (Crab-eating macaque) protein is Aspartate aminotransferase, cytoplasmic.